The following is a 920-amino-acid chain: Translation initiation factor IF-2 (920 aa).

The tract at residues 33 to 305 (KSASSTVEAP…RGRKSKRAKR (273 aa)) is disordered. The segment covering 53-86 (SKSAPAPAKSAGNGATAAPATSATPATAAAAAAP) has biased composition (low complexity). 3 stretches are compositionally biased toward pro residues: residues 87 to 159 (APAP…PAPR), 179 to 193 (PRPQ…PGTP), and 201 to 212 (NMPPRPAGPRPG). A compositionally biased stretch (gly residues) spans 225–291 (PGGRGPGGGG…GAAGAFGRPG (67 aa)). Positions 295-304 (KRGRKSKRAK) are enriched in basic residues. Residues 416-588 (IRPPVVTVMG…VLLTADASLD (173 aa)) form the tr-type G domain. Positions 425–432 (GHVDHGKT) are G1. Position 425-432 (425-432 (GHVDHGKT)) interacts with GTP. The segment at 450-454 (GITQH) is G2. The G3 stretch occupies residues 475–478 (DTPG). GTP is bound by residues 475-479 (DTPGH) and 529-532 (NKID). The segment at 529–532 (NKID) is G4. A G5 region spans residues 565-567 (SAK).

The protein belongs to the TRAFAC class translation factor GTPase superfamily. Classic translation factor GTPase family. IF-2 subfamily.

It is found in the cytoplasm. Functionally, one of the essential components for the initiation of protein synthesis. Protects formylmethionyl-tRNA from spontaneous hydrolysis and promotes its binding to the 30S ribosomal subunits. Also involved in the hydrolysis of GTP during the formation of the 70S ribosomal complex. In Mycobacterium sp. (strain JLS), this protein is Translation initiation factor IF-2.